A 457-amino-acid chain; its full sequence is Cytochrome b-c1 complex subunit 1, mitochondrial (457 aa).

Residues 1–26 (MLRTVTSKTVSNQFKRSLATAVATPK) constitute a mitochondrion transit peptide.

Belongs to the peptidase M16 family. UQCRC1/QCR1 subfamily. In terms of assembly, component of the ubiquinol-cytochrome c oxidoreductase (cytochrome b-c1 complex, complex III, CIII), a multisubunit enzyme composed of 10 subunits. The complex is composed of 3 respiratory subunits cytochrome b (COB), cytochrome c1 (CYT1) and Rieske protein (RIP1), 2 core protein subunits COR1 and QCR2, and 5 low-molecular weight protein subunits QCR6, QCR7, QCR8, QCR9 and QCR10. The complex exists as an obligatory dimer and forms supercomplexes (SCs) in the inner mitochondrial membrane with a monomer or a dimer of cytochrome c oxidase (complex IV, CIV), resulting in 2 different assemblies (supercomplexes III(2)IV and III(2)IV(2)). COR1 interacts with COX5A at the CIII-CIV interface.

The protein localises to the mitochondrion inner membrane. Functionally, component of the ubiquinol-cytochrome c oxidoreductase, a multisubunit transmembrane complex that is part of the mitochondrial electron transport chain which drives oxidative phosphorylation. The respiratory chain contains 3 multisubunit complexes succinate dehydrogenase (complex II, CII), ubiquinol-cytochrome c oxidoreductase (cytochrome b-c1 complex, complex III, CIII) and cytochrome c oxidase (complex IV, CIV), that cooperate to transfer electrons derived from NADH and succinate to molecular oxygen, creating an electrochemical gradient over the inner membrane that drives transmembrane transport and the ATP synthase. The cytochrome b-c1 complex catalyzes electron transfer from ubiquinol to cytochrome c, linking this redox reaction to translocation of protons across the mitochondrial inner membrane, with protons being carried across the membrane as hydrogens on the quinol. In the process called Q cycle, 2 protons are consumed from the matrix, 4 protons are released into the intermembrane space and 2 electrons are passed to cytochrome c. The polypeptide is Cytochrome b-c1 complex subunit 1, mitochondrial (COR1) (Saccharomyces cerevisiae (strain ATCC 204508 / S288c) (Baker's yeast)).